Here is a 161-residue protein sequence, read N- to C-terminus: Regulatory protein RecX (161 aa).

The protein belongs to the RecX family.

It is found in the cytoplasm. Modulates RecA activity. This chain is Regulatory protein RecX, found in Thermotoga petrophila (strain ATCC BAA-488 / DSM 13995 / JCM 10881 / RKU-1).